Here is an 862-residue protein sequence, read N- to C-terminus: Dipeptidyl peptidase 9 (862 aa).

Residues serine 729, aspartate 807, and histidine 839 each act as charge relay system in the active site. Serine 729 contributes to the Val-boroPro binding site.

This sequence belongs to the peptidase S9B family. DPPIV subfamily. Homodimer. Forms a ternary complex with NLRP1, composed of a DPP9 homodimer, one full-length NLRP1 protein, and one cleaved C-terminus of NLRP1 (NACHT, LRR and PYD domains-containing protein 1, C-terminus). Forms a ternary complex with CARD8, composed of a DPP9 homodimer, one full-length NLRP1 protein, and one cleaved C-terminus of CARD8 (Caspase recruitment domain-containing protein 8, C-terminus). In the ternary complex, only one subunit of the DPP9 homodimer is bound to NLRP1 or CARD8. Detected in kidney, skin, brain, thymus and liver (at protein level).

It localises to the cytoplasm. Its subcellular location is the cytosol. The enzyme catalyses Release of an N-terminal dipeptide, Xaa-Yaa-|-Zaa-, from a polypeptide, preferentially when Yaa is Pro, provided Zaa is neither Pro nor hydroxyproline.. Its activity is regulated as follows. Inhibited by the serine proteinase inhibitor 4-(2-aminoethyl)benzenesulphonyl fluoride (AEBSF), and by di-isopropylfluorophosphate. Inhibited by Val-boroPro (Talabostat, PT-100), a non-selective inhibitor, which triggers pyroptosis in monocytes and macrophages. Val-boroPro inhibits activity by binding to the active site, mimicking a substrate-bound state, thereby displacing the C-terminal fragment of NLRP1, leading to activation of the NLRP1 inflammasome. In contrast, Val-boroPro does not directly displaces CARD8: it acts by promoting degradation of the N-terminal part of CARD8, leading to indirect disruption of the ternary complex. In terms of biological role, dipeptidyl peptidase that cleaves off N-terminal dipeptides from proteins having a Pro or Ala residue at position 2. Acts as a key inhibitor of caspase-1-dependent monocyte and macrophage pyroptosis in resting cells by preventing activation of NLRP1 and CARD8. Sequesters the cleaved C-terminal part of NLRP1 and CARD8, which respectively constitute the active part of the NLRP1 and CARD8 inflammasomes, in a ternary complex, thereby preventing their oligomerization and activation. The dipeptidyl peptidase activity is required to suppress NLRP1 and CARD8; however, neither NLRP1 nor CARD8 are bona fide substrates of DPP9, suggesting the existence of substrate(s) required for NLRP1 and CARD8 inhibition. The polypeptide is Dipeptidyl peptidase 9 (Mus musculus (Mouse)).